A 540-amino-acid polypeptide reads, in one-letter code: Chaperonin GroEL (540 aa).

ATP is bound by residues 29–32, 86–90, glycine 413, 476–478, and aspartate 492; these read TLGP, DGTTT, and NAA.

The protein belongs to the chaperonin (HSP60) family. In terms of assembly, forms a cylinder of 14 subunits composed of two heptameric rings stacked back-to-back. Interacts with the co-chaperonin GroES.

It is found in the cytoplasm. It catalyses the reaction ATP + H2O + a folded polypeptide = ADP + phosphate + an unfolded polypeptide.. In terms of biological role, together with its co-chaperonin GroES, plays an essential role in assisting protein folding. The GroEL-GroES system forms a nano-cage that allows encapsulation of the non-native substrate proteins and provides a physical environment optimized to promote and accelerate protein folding. This chain is Chaperonin GroEL, found in Streptococcus pneumoniae (strain ATCC 700669 / Spain 23F-1).